The primary structure comprises 485 residues: UBX domain-containing protein 11 (485 aa).

The interval 1–26 (MSSPLASLSKTRKVPLESEPVNPGRR) is disordered. Positions 67–143 (HDSELLTSMA…VGEMERFLND (77 aa)) form a coiled coil. The 65-residue stretch at 224–288 (LEPIPLKLYR…VSDLRNQVYP (65 aa)) folds into the SEP domain. The region spanning 386–463 (PVPPLSMLRI…GLVPNATLLL (78 aa)) is the UBX domain. Phosphoserine occurs at positions 479 and 483.

As to quaternary structure, interacts with GNA12, GNA13, RND1, RND2 and RND3. Strongly expressed in testis. Also expressed in lung, brain and thymus.

Its subcellular location is the cytoplasm. The protein localises to the cytoskeleton. Its function is as follows. May be involved in the reorganization of actin cytoskeleton mediated by RND1, RND2 and RND3. Promotes RHOA activation mediated by GNA12 and GNA13. This is UBX domain-containing protein 11 (Ubxn11) from Rattus norvegicus (Rat).